A 426-amino-acid polypeptide reads, in one-letter code: Glutamyl-tRNA reductase (426 aa).

Substrate is bound by residues 49–52, Ser101, 106–108, and Gln112; these read TCNR and EPQ. Cys50 functions as the Nucleophile in the catalytic mechanism. NADP(+) is bound at residue 181–186; that stretch reads GAGETI. A disordered region spans residues 405-426; the sequence is RLFPEKPGYQHPPHSYPDREDR.

Belongs to the glutamyl-tRNA reductase family. Homodimer.

The enzyme catalyses (S)-4-amino-5-oxopentanoate + tRNA(Glu) + NADP(+) = L-glutamyl-tRNA(Glu) + NADPH + H(+). The protein operates within porphyrin-containing compound metabolism; protoporphyrin-IX biosynthesis; 5-aminolevulinate from L-glutamyl-tRNA(Glu): step 1/2. Its function is as follows. Catalyzes the NADPH-dependent reduction of glutamyl-tRNA(Glu) to glutamate 1-semialdehyde (GSA). The polypeptide is Glutamyl-tRNA reductase (Xanthomonas axonopodis pv. citri (strain 306)).